A 317-amino-acid chain; its full sequence is 2,3,4,5-tetrahydropyridine-2,6-dicarboxylate N-succinyltransferase (317 aa).

Mg(2+) is bound by residues Asp-166 and Glu-183. Residue Glu-199 is the Acyl-anhydride intermediate of the active site. Succinyl-CoA contacts are provided by residues Arg-201, Gly-216, Ser-219, Ala-242, 257-258, Gly-265, Lys-277, and 290-293; these read EA and RRNS.

This sequence belongs to the type 2 tetrahydrodipicolinate N-succinyltransferase family. As to quaternary structure, homotrimer.

The protein resides in the cytoplasm. The enzyme catalyses (S)-2,3,4,5-tetrahydrodipicolinate + succinyl-CoA + H2O = (S)-2-succinylamino-6-oxoheptanedioate + CoA. Its pathway is amino-acid biosynthesis; L-lysine biosynthesis via DAP pathway; LL-2,6-diaminopimelate from (S)-tetrahydrodipicolinate (succinylase route): step 1/3. Functionally, catalyzes the conversion of the cyclic tetrahydrodipicolinate (THDP) into the acyclic N-succinyl-L-2-amino-6-oxopimelate using succinyl-CoA. In Mycobacterium tuberculosis (strain CDC 1551 / Oshkosh), this protein is 2,3,4,5-tetrahydropyridine-2,6-dicarboxylate N-succinyltransferase (dapD).